The chain runs to 303 residues: Uridylate-specific endoribonuclease C (303 aa).

The first 16 residues, 1-16, serve as a signal peptide directing secretion; it reads MVYLVFLCLLPSLISG. An EndoU domain is found at 32 to 303; it reads TDAEIQSLAE…KRFVASSYPI (272 aa). Residues histidine 181, histidine 196, and lysine 239 contribute to the active site. Asparagine 287 is a glycosylation site (N-linked (GlcNAc...) asparagine).

It belongs to the ENDOU family. As to quaternary structure, monomer. Mn(2+) is required as a cofactor.

Its subcellular location is the secreted. It catalyses the reaction ribonucleotidyl-uridine-RNA = a 5'-end dephospho-uridine-RNA + a 3'-end 2',3'-cyclophospho-ribonucleotide-RNA. Functionally, endoribonuclease that cleaves single-stranded RNAs at 5' of uridylates and releases a product with a 2',3'-cyclic phosphate at the 3'-end. The sequence is that of Uridylate-specific endoribonuclease C (endou-c) from Xenopus laevis (African clawed frog).